The primary structure comprises 647 residues: RalA-binding protein 1 (647 aa).

Disordered regions lie at residues 1–151 and 163–186; these read MTEC…EKKC and WKEK…APSL. Position 2 is an N-acetylthreonine (T2). Polar residues predominate over residues 24 to 33; sequence LTRTPSSEEI. A phosphoserine mark is found at S29, S30, and S34. T44 carries the post-translational modification Phosphothreonine. Phosphoserine is present on residues S48 and S62. Basic and acidic residues predominate over residues 52–68; that stretch reads DILHEPPDIVSDDEKDH. 69-74 contributes to the ATP binding site; it reads GKKKGK. Residues 69-79 are compositionally biased toward basic residues; it reads GKKKGKFKKKE. Phosphoserine is present on residues S92 and S93. Positions 102–118 are enriched in basic residues; that stretch reads KMKRSKGIHVFKKPSFS. The tract at residues 102-119 is nuclear localization signal; it reads KMKRSKGIHVFKKPSFSK. Positions 119 to 151 are enriched in basic and acidic residues; that stretch reads KKKEKDFKIKEKPKEEKHKEEKHKEEKHKEKKC. The tract at residues 154–219 is mediates association with membranes and could form transmembrane domains; sequence FTAADVVKQW…PAVFRECVDY (66 aa). A Rho-GAP domain is found at 192-380; it reads APFADAVERT…VLLKQVTRPL (189 aa). The tract at residues 403 to 499 is mediates interaction with RALA and RALB; it reads RRQEFLLNCL…LTEQEELLAM (97 aa). An ATP-binding site is contributed by 418–425; that stretch reads GGIKDFSK. 2 positions are modified to phosphoserine: S461 and S463. The mediates interaction with REPS1 and REPS2 stretch occupies residues 500–647; sequence EQFLRRQIAS…PSKDRKETPI (148 aa). Disordered stretches follow at residues 525–550 and 601–647; these read QSRQ…DEEE and EQQL…ETPI. The segment covering 535-550 has biased composition (acidic residues); the sequence is EEYSSDSESESEDEEE. Over residues 628 to 647 the composition is skewed to basic and acidic residues; that stretch reads RAAKEQAKPSPSKDRKETPI. Phosphoserine is present on S637.

Interacts with the GTP-bound form of RALA (via effector domain); during mitosis, recruits RALBP1 to the mitochondrion where it promotes DNM1L phosphorylation and mitochondrial fission. Interacts with DNM1L; mediates its mitotic kinase cyclin B-CDK1-mediated phosphorylation during mitosis to promote mitochondrial fission. Interacts with the mitotic kinase cyclin B-CDK1 during mitosis. Interacts with the GTP-bound form of RALB (via effector domain). Interacts with REPS1; the interaction is direct and does not affect RALA-binding nor GTPase activator activity of RALBP1. Interacts with REPS2; the interaction is direct and does not affect RALA-binding nor GTPase activator activity of RALBP1. Interacts with EPN1, NUMB and TFAP2A during interphase and mitosis. Interacts with AP2M1; as part of the AP2 complex. Interacts with CDC42. Interacts with RAC1. Post-translationally, tyrosine-phosphorylated upon stimulation of cells with EGF. In terms of processing, may undergo proteolytic cleavage to give peptides which reassemble to form a transporter complex. Ubiquitously expressed.

It is found in the cell membrane. Its subcellular location is the cytoplasm. The protein resides in the cytosol. It localises to the cytoskeleton. The protein localises to the spindle pole. It is found in the nucleus. Its subcellular location is the mitochondrion. It carries out the reaction an S-substituted glutathione(in) + ATP + H2O = an S-substituted glutathione(out) + ADP + phosphate + H(+). The enzyme catalyses ATP + H2O + xenobioticSide 1 = ADP + phosphate + xenobioticSide 2.. The catalysed reaction is leukotriene C4(in) + ATP + H2O = leukotriene C4(out) + ADP + phosphate + H(+). Multifunctional protein that functions as a downstream effector of RALA and RALB. As a GTPase-activating protein/GAP can inactivate CDC42 and RAC1 by stimulating their GTPase activity. As part of the Ral signaling pathway, may also regulate ligand-dependent EGF and insulin receptors-mediated endocytosis. During mitosis, may act as a scaffold protein in the phosphorylation of EPSIN/EPN1 by the mitotic kinase cyclin B-CDK1, preventing endocytosis during that phase of the cell cycle. During mitosis, also controls mitochondrial fission as an effector of RALA. Recruited to mitochondrion by RALA, acts as a scaffold to foster the mitotic kinase cyclin B-CDK1-mediated phosphorylation and activation of DNM1L. Functionally, could also function as a primary ATP-dependent active transporter for glutathione conjugates of electrophiles. May also actively catalyze the efflux of a wide range of substrates including xenobiotics like doxorubicin (DOX) contributing to cell multidrug resistance. This chain is RalA-binding protein 1, found in Rattus norvegicus (Rat).